Reading from the N-terminus, the 260-residue chain is Dehydrogenase/reductase SDR family member 4 (260 aa).

Residue 14–38 (IVTAATKGIGLAIAERLLDEGASVV) coordinates NADP(+). Ser148 is a binding site for substrate. Catalysis depends on Tyr161, which acts as the Proton acceptor. Lys165 serves as a coordination point for NADP(+).

It belongs to the short-chain dehydrogenases/reductases (SDR) family.

It catalyses the reaction a secondary alcohol + NADP(+) = a ketone + NADPH + H(+). In terms of biological role, catalyzes the reduction of isatin, 4-oxonon-2-enal, 9,10-phenanthrenequinone, menadione, 2,3-hexaenadione, 3,4-hexanedione and 2,3-heptanedione. The chain is Dehydrogenase/reductase SDR family member 4 from Caenorhabditis elegans.